The primary structure comprises 131 residues: Glycine cleavage system H protein (131 aa).

A Lipoyl-binding domain is found at 24-106 (RVTVGISDHA…YGEGWIFVVE (83 aa)). At Lys65 the chain carries N6-lipoyllysine.

This sequence belongs to the GcvH family. As to quaternary structure, the glycine cleavage system is composed of four proteins: P, T, L and H. It depends on (R)-lipoate as a cofactor.

In terms of biological role, the glycine cleavage system catalyzes the degradation of glycine. The H protein shuttles the methylamine group of glycine from the P protein to the T protein. The chain is Glycine cleavage system H protein from Xanthomonas campestris pv. campestris (strain 8004).